The sequence spans 213 residues: uncharacterized protein (213 aa).

This is an uncharacterized protein from Bacillus subtilis (strain 168).